We begin with the raw amino-acid sequence, 1201 residues long: MLDVNNFEYMKIGLASPDKIRSWSHGEVKKPETINYRTLKPERDGLFCERIFGPMKDWECSCGKYKRVRYKGVVCDRCGVEVTKSKVRRERMGHIELAAPVSHIWYFKGIPSRMGLVMDMSPRALEEIIYFASYVVTEPGDTPLEKKQLLSEREYRVYREKYGKGFSAGMGAEAIKKILADIDLEKETNDLKEELKSAQGQRRTRAIRRLEVMEAFRNSGNNPSWMVLDVLPVIPPEIRPMVQLEGGRFATSDLNDLYRRVINRNNRLKRLLDLGAPNIIVQNEKRMLQEAVDALIDNGRRGRPVTGPGNRPLKSLSHMLKGKQGRFRQNLLGKRVDYSGRSVIVVGPNLKMYQCGLPKEMALELFKPFVMKELVGRGLAHNIKSAKRKIERMAPEIWDVLEEVIREHPVLLNRAPTLHRLGIQAFEPTLVEGRAIRLHPLVCTAYNADFDGDQMAVHVPLSAEAQAEARILMLAAQNILNPKDGKPVVTPSQDMVLGNYYLTLERENAVGEGTIFKDINEAQLAYQNGYVHLHSRIAVFAGSIPNERFTDEQRNQLLITTVGKLIFNTILPKSFPYINEPTKFNLEIETPAKYFVDTTTDVRAHIAAQELIDPFKKKILGNIIAEVFKKFHITETSKMLDRMKDLGFKISTKAGMTVGIADILTLEEKHEILEKAHDTVEKITKSFRRGLITDDERYERVIGVWNAAKDEIQGKLILSLDRLNPIFMMQDSGARGNISNFTQLAGMRGLMADPSGRIVELPITSNFREGLTVLEYFISTHGARKGLTDTALKTADSGYLTRRLVDVAQDVIIREDDCGTDRGLTIKAIREGTEIIEPLEERLEGRYSRKTIRHPETKEVIARENDLITEAIATQIVDAGIEEVTIRSAFTCNTKHGVCKKCYGKNLATGTEVEVGEAVGIIAAQSIGEPGTQLTMRTFHTGGVAGDDITQGLPRIQEIFEARNPKGQAIITEVGGEVVSIEEGRDRQQEITIQGTDDRRSYNIPYTARLRVEEGTIVERGEALTEGSVDPKALIRVRDVLSVQEYLLAEVQKVYRMQGVEIGDKHVEVMVRQMLRKIRVMDTGDTNILPGTLMDIHTFTEANRDAILSGSQPATGRPVLLGITKASLETDSFLSAASFQETTRVLTDAAIKGKRDELLGLKENVILGKLVPAGTGIGRYRKLKSEVIKETAEVTDEITNI.

Residues C60, C62, C75, and C78 each coordinate Zn(2+). Mg(2+)-binding residues include D449, D451, and D453. C818, C892, C899, and C902 together coordinate Zn(2+).

The protein belongs to the RNA polymerase beta' chain family. As to quaternary structure, the RNAP catalytic core consists of 2 alpha, 1 beta, 1 beta' and 1 omega subunit. When a sigma factor is associated with the core the holoenzyme is formed, which can initiate transcription. Requires Mg(2+) as cofactor. Zn(2+) is required as a cofactor.

It carries out the reaction RNA(n) + a ribonucleoside 5'-triphosphate = RNA(n+1) + diphosphate. Functionally, DNA-dependent RNA polymerase catalyzes the transcription of DNA into RNA using the four ribonucleoside triphosphates as substrates. The polypeptide is DNA-directed RNA polymerase subunit beta' (Listeria monocytogenes serotype 4b (strain F2365)).